A 180-amino-acid chain; its full sequence is Hypoxanthine-guanine phosphoribosyltransferase (180 aa).

Positions 43 and 44 each coordinate diphosphate. Positions 99 and 100 each coordinate Mg(2+). Asp103 (proton acceptor) is an active-site residue. GMP contacts are provided by residues Lys131, 152–153 (FI), and Asp159. Arg165 lines the diphosphate pocket.

Belongs to the purine/pyrimidine phosphoribosyltransferase family. Mg(2+) serves as cofactor.

Its subcellular location is the cytoplasm. The enzyme catalyses IMP + diphosphate = hypoxanthine + 5-phospho-alpha-D-ribose 1-diphosphate. It catalyses the reaction GMP + diphosphate = guanine + 5-phospho-alpha-D-ribose 1-diphosphate. It functions in the pathway purine metabolism; IMP biosynthesis via salvage pathway; IMP from hypoxanthine: step 1/1. The protein operates within purine metabolism; GMP biosynthesis via salvage pathway; GMP from guanine: step 1/1. In terms of biological role, purine salvage pathway enzyme that catalyzes the transfer of the ribosyl-5-phosphate group from 5-phospho-alpha-D-ribose 1-diphosphate (PRPP) to the N9 position of the 6-oxopurines hypoxanthine and guanine to form the corresponding ribonucleotides IMP (inosine 5'-monophosphate) and GMP (guanosine 5'-monophosphate), with the release of PPi. The polypeptide is Hypoxanthine-guanine phosphoribosyltransferase (hpt) (Streptococcus thermophilus (strain CNRZ 1066)).